The chain runs to 325 residues: GMP reductase (325 aa).

The Thioimidate intermediate role is filled by Cys-174. 203 to 226 (MIADGGIRTHGDIAKSIRFGASMV) contacts NADP(+).

This sequence belongs to the IMPDH/GMPR family. GuaC type 2 subfamily.

It catalyses the reaction IMP + NH4(+) + NADP(+) = GMP + NADPH + 2 H(+). Its function is as follows. Catalyzes the irreversible NADPH-dependent deamination of GMP to IMP. It functions in the conversion of nucleobase, nucleoside and nucleotide derivatives of G to A nucleotides, and in maintaining the intracellular balance of A and G nucleotides. In Staphylococcus carnosus (strain TM300), this protein is GMP reductase.